A 131-amino-acid chain; its full sequence is Small ribosomal subunit protein uS11 (131 aa).

Residues 1–15 (MAAKTVKKTRRRKER) show a composition bias toward basic residues. Residues 1–23 (MAAKTVKKTRRRKERKNVEHGAA) form a disordered region.

Belongs to the universal ribosomal protein uS11 family. In terms of assembly, part of the 30S ribosomal subunit. Interacts with proteins S7 and S18. Binds to IF-3.

Its function is as follows. Located on the platform of the 30S subunit, it bridges several disparate RNA helices of the 16S rRNA. Forms part of the Shine-Dalgarno cleft in the 70S ribosome. The protein is Small ribosomal subunit protein uS11 of Clostridium beijerinckii (strain ATCC 51743 / NCIMB 8052) (Clostridium acetobutylicum).